Here is a 249-residue protein sequence, read N- to C-terminus: MASVNVDFEQAGELKIGQVGIANLRVRTLDVSRLVQEMRERVTRAPKLFGRAAVILDFGGLSQVPDLATAKALLEGLRDAGVLPVALAYGTSEIDLLSQQLGVPLLAKFRAQYEPTAVSPPPPPPPPPARAEPAPPAARPAPGRMQRTAVRSGQQLYAENCDLTVLSTVGAGAEVIADGSIHIYGTLRGRALAGAQGNPDARIFCRDFHAELVAIAGHYKVLDDVPMDLRGKAVQVWLEQDQIKIAALD.

The segment at 115–144 (PTAVSPPPPPPPPPARAEPAPPAARPAPGR) is disordered. The segment covering 118–139 (VSPPPPPPPPPARAEPAPPAAR) has biased composition (pro residues).

The protein belongs to the MinC family. As to quaternary structure, interacts with MinD and FtsZ.

In terms of biological role, cell division inhibitor that blocks the formation of polar Z ring septums. Rapidly oscillates between the poles of the cell to destabilize FtsZ filaments that have formed before they mature into polar Z rings. Prevents FtsZ polymerization. The protein is Probable septum site-determining protein MinC of Xanthomonas axonopodis pv. citri (strain 306).